The chain runs to 205 residues: 2-dehydro-3-deoxy-6-phosphogalactonate aldolase (205 aa).

R14 serves as a coordination point for 2-dehydro-3-deoxy-6-phospho-D-galactonate. E37 serves as the catalytic Proton donor/acceptor. The 2-dehydro-3-deoxy-6-phospho-D-galactonate site is built by T66, K126, G156, G176, and S177. The active-site Schiff-base intermediate with substrate is K126.

This sequence belongs to the KHG/KDPG aldolase family. Homotrimer.

The enzyme catalyses 2-dehydro-3-deoxy-6-phospho-D-galactonate = D-glyceraldehyde 3-phosphate + pyruvate. The protein operates within carbohydrate acid metabolism; D-galactonate degradation; D-glyceraldehyde 3-phosphate and pyruvate from D-galactonate: step 3/3. Functionally, involved in the degradation of galactose via the DeLey-Doudoroff pathway. Catalyzes the reversible, stereospecific retro-aldol cleavage of 2-keto-3-deoxy-6-phosphogalactonate (KDPGal) to pyruvate and D-glyceraldehyde-3-phosphate. In the synthetic direction, it catalyzes the addition of pyruvate to electrophilic aldehydes with re-facial selectivity. It can use a limited number of aldehyde substrates, including D-glyceraldehyde-3-phosphate (natural substrate), D-glyceraldehyde, glycolaldehyde, 2-pyridinecarboxaldehyde, D-ribose, D-erythrose and D-threose. It efficiently catalyzes aldol addition only using pyruvate as the nucleophilic component and accepts both stereochemical configurations at C2 of the electrophile. The chain is 2-dehydro-3-deoxy-6-phosphogalactonate aldolase (dgoA) from Escherichia coli (strain K12).